We begin with the raw amino-acid sequence, 232 residues long: Oxidoreductase 1 (232 aa).

The protein belongs to the MQO family. The cofactor is FAD.

Its function is as follows. Oxidoreductase; part of the gene cluster that mediates the biosynthesis of elsinochromes, pigments consisting of at least four interconvertible tautomers (A, B, C and D) that have a core phenolic quinone to which various side chains are attached and which play an important role in fungal pathogenesis. The non-reducing polyketide synthase PKS1 was proposed to iteratively catalyze decarboxylation between acetyl-CoA and malonyl-CoA subunits for polyketide chain elongation. The released polyketide undergoes cyclization to form an aromatic ring, and proceeds via serial modification steps to produce the heptaketide back- bone of elsinochrome. As elsinochrome has a symmetrical structure, two identical heptaketides are fused to form a core 1,2-dihydrobenzo-perylene ring structure, which can then be successively modified to produce the various derivatives of elsinochrome. Some of these reactions may be cooperatively carried out, at least in part, by the products of RDT1, OXR1 and PKS1. PRF1, embedded within the elsinochrome cluster possibly functions to stabilize some of the biosynthetic enzymes required for elsinochrome production. As prefoldin is a hexamer containing 2 a and 4 b subunits, additional prefoldin subunits, whose coding genes may not immediately link to the elsinochrome biosynthetic gene cluster, are required to fulfill the chaperone function. In addition, no methyltransferase-coding gene exists within the biosynthetic gene cluster, even though elsinochrome has four methyl groups at positions C3, C7, C8 and C12. Apparently, the identified gene cluster does not contain the entire entourage of genes responsible for elsinochrome biosynthesis. Once elsinochrome is synthesized, it must be exported outside the fungal cells, which is probably accomplished by the ECT1 transporter, to avoid toxicity. This chain is Oxidoreductase 1, found in Elsinoe fawcettii (Citrus scab fungus).